A 231-amino-acid chain; its full sequence is Pathogenesis-related thaumatin-like protein 3.7 (231 aa).

A signal peptide spans 1-27 (MATVSDLALLLVAGLVAISLHMQEAGA). Disulfide bonds link cysteine 36–cysteine 230, cysteine 77–cysteine 87, cysteine 92–cysteine 98, cysteine 143–cysteine 218, cysteine 148–cysteine 201, cysteine 156–cysteine 166, cysteine 170–cysteine 179, and cysteine 180–cysteine 188.

It belongs to the thaumatin family.

May be involved in disease resistance. This Cryptomeria japonica (Japanese cedar) protein is Pathogenesis-related thaumatin-like protein 3.7.